The sequence spans 238 residues: Probable transcriptional regulatory protein CT_457 (238 aa).

Residues Met1–Lys21 are disordered. Residues Asn9–Lys21 are compositionally biased toward basic residues.

It belongs to the TACO1 family.

The protein localises to the cytoplasm. This chain is Probable transcriptional regulatory protein CT_457, found in Chlamydia trachomatis serovar D (strain ATCC VR-885 / DSM 19411 / UW-3/Cx).